We begin with the raw amino-acid sequence, 260 residues long: Snake venom serine protease 2 (260 aa).

Positions 1-18 are cleaved as a signal peptide; sequence MVLIRVLANLLILQLFYA. Residues 19–24 constitute a propeptide that is removed on maturation; sequence QKSSEL. Positions 25–251 constitute a Peptidase S1 domain; that stretch reads IIGGDECNIN…HLDWIKSIIA (227 aa). 6 cysteine pairs are disulfide-bonded: Cys31-Cys165, Cys52-Cys68, Cys100-Cys258, Cys144-Cys212, Cys176-Cys191, and Cys202-Cys227. Asn123 and Asn124 each carry an N-linked (GlcNAc...) asparagine glycan.

It belongs to the peptidase S1 family. Snake venom subfamily. Monomer. Expressed by the venom gland.

The protein localises to the secreted. Its function is as follows. Snake venom serine protease that may act in the hemostasis system of the prey. The sequence is that of Snake venom serine protease 2 (TLF2) from Protobothrops flavoviridis (Habu).